A 222-amino-acid polypeptide reads, in one-letter code: GTP cyclohydrolase 1 (222 aa).

3 residues coordinate Zn(2+): cysteine 111, histidine 114, and cysteine 182.

This sequence belongs to the GTP cyclohydrolase I family. As to quaternary structure, homomer.

The enzyme catalyses GTP + H2O = 7,8-dihydroneopterin 3'-triphosphate + formate + H(+). The protein operates within cofactor biosynthesis; 7,8-dihydroneopterin triphosphate biosynthesis; 7,8-dihydroneopterin triphosphate from GTP: step 1/1. The polypeptide is GTP cyclohydrolase 1 (Klebsiella pneumoniae (strain 342)).